Consider the following 402-residue polypeptide: Homoserine O-acetyltransferase (402 aa).

The 322-residue stretch at Asn38–Pro359 folds into the AB hydrolase-1 domain. The active-site Nucleophile is Ser146. Arg217 contributes to the substrate binding site. Active-site residues include Asp319 and His352. Asp353 serves as a coordination point for substrate.

The protein belongs to the AB hydrolase superfamily. MetX family. In terms of assembly, homodimer.

The protein resides in the cytoplasm. It catalyses the reaction L-homoserine + acetyl-CoA = O-acetyl-L-homoserine + CoA. The protein operates within amino-acid biosynthesis; L-methionine biosynthesis via de novo pathway; O-acetyl-L-homoserine from L-homoserine: step 1/1. Transfers an acetyl group from acetyl-CoA to L-homoserine, forming acetyl-L-homoserine. This Haloarcula marismortui (strain ATCC 43049 / DSM 3752 / JCM 8966 / VKM B-1809) (Halobacterium marismortui) protein is Homoserine O-acetyltransferase.